The following is a 207-amino-acid chain: Outer-membrane lipoprotein LolB (207 aa).

Residues 1-21 form the signal peptide; that stretch reads MPTNTVRCLRLLPLASVLLAA. Cys22 carries N-palmitoyl cysteine lipidation. The S-diacylglycerol cysteine moiety is linked to residue Cys22.

Belongs to the LolB family. In terms of assembly, monomer.

The protein localises to the cell outer membrane. In terms of biological role, plays a critical role in the incorporation of lipoproteins in the outer membrane after they are released by the LolA protein. The polypeptide is Outer-membrane lipoprotein LolB (Pectobacterium carotovorum subsp. carotovorum (strain PC1)).